We begin with the raw amino-acid sequence, 226 residues long: Cytochrome c oxidase subunit 2 (226 aa).

Over 1–25 (MNTWLLSLQNSNSPTYDMMIFFHDF) the chain is Mitochondrial intermembrane. A helical transmembrane segment spans residues 26–47 (TMMILIFITLLILFIMFTMINN). The Mitochondrial matrix segment spans residues 48-61 (NLINRFLLQGHFIE). Residues 62–81 (LIWTITPMIILILIAIPSFK) form a helical membrane-spanning segment. At 82–226 (ILYLTDEMFN…YFKNWLKSFL (145 aa)) the chain is on the mitochondrial intermembrane side. Residues histidine 160, cysteine 195, glutamate 197, cysteine 199, histidine 203, and methionine 206 each coordinate Cu cation. Position 197 (glutamate 197) interacts with Mg(2+).

It belongs to the cytochrome c oxidase subunit 2 family. As to quaternary structure, component of the cytochrome c oxidase (complex IV, CIV), a multisubunit enzyme composed of a catalytic core of 3 subunits and several supernumerary subunits. The complex exists as a monomer or a dimer and forms supercomplexes (SCs) in the inner mitochondrial membrane with ubiquinol-cytochrome c oxidoreductase (cytochrome b-c1 complex, complex III, CIII). It depends on Cu cation as a cofactor.

The protein resides in the mitochondrion inner membrane. It catalyses the reaction 4 Fe(II)-[cytochrome c] + O2 + 8 H(+)(in) = 4 Fe(III)-[cytochrome c] + 2 H2O + 4 H(+)(out). Component of the cytochrome c oxidase, the last enzyme in the mitochondrial electron transport chain which drives oxidative phosphorylation. The respiratory chain contains 3 multisubunit complexes succinate dehydrogenase (complex II, CII), ubiquinol-cytochrome c oxidoreductase (cytochrome b-c1 complex, complex III, CIII) and cytochrome c oxidase (complex IV, CIV), that cooperate to transfer electrons derived from NADH and succinate to molecular oxygen, creating an electrochemical gradient over the inner membrane that drives transmembrane transport and the ATP synthase. Cytochrome c oxidase is the component of the respiratory chain that catalyzes the reduction of oxygen to water. Electrons originating from reduced cytochrome c in the intermembrane space (IMS) are transferred via the dinuclear copper A center (CU(A)) of subunit 2 and heme A of subunit 1 to the active site in subunit 1, a binuclear center (BNC) formed by heme A3 and copper B (CU(B)). The BNC reduces molecular oxygen to 2 water molecules using 4 electrons from cytochrome c in the IMS and 4 protons from the mitochondrial matrix. In Lasius sp, this protein is Cytochrome c oxidase subunit 2 (COII).